The primary structure comprises 254 residues: Isoprenyl transferase (254 aa).

The active site involves Asp24. Asp24 provides a ligand contact to Mg(2+). Substrate contacts are provided by residues 25 to 28 (GNGR), Trp29, Arg37, His41, and 69 to 71 (SSE). The active-site Proton acceptor is the Asn72. Substrate contacts are provided by residues Trp73, Arg75, Arg192, and 198-200 (RIS). Glu211 serves as a coordination point for Mg(2+).

Belongs to the UPP synthase family. Homodimer. Mg(2+) serves as cofactor.

Its function is as follows. Catalyzes the condensation of isopentenyl diphosphate (IPP) with allylic pyrophosphates generating different type of terpenoids. The chain is Isoprenyl transferase from Bordetella parapertussis (strain 12822 / ATCC BAA-587 / NCTC 13253).